The primary structure comprises 296 residues: Probable endonuclease 4 (296 aa).

Zn(2+) contacts are provided by H68, H109, E144, D178, H181, H213, D226, H228, and E258.

The protein belongs to the AP endonuclease 2 family. Requires Zn(2+) as cofactor.

The enzyme catalyses Endonucleolytic cleavage to 5'-phosphooligonucleotide end-products.. Its function is as follows. Endonuclease IV plays a role in DNA repair. It cleaves phosphodiester bonds at apurinic or apyrimidinic (AP) sites, generating a 3'-hydroxyl group and a 5'-terminal sugar phosphate. This chain is Probable endonuclease 4, found in Pediococcus pentosaceus (strain ATCC 25745 / CCUG 21536 / LMG 10740 / 183-1w).